The sequence spans 379 residues: Lactosylceramide 1,3-N-acetyl-beta-D-glucosaminyltransferase A (379 aa).

The Cytoplasmic segment spans residues 1–12 (MFMNCRRVKKWH). Residues 13-30 (FLQLLSMCCVMSVLMVCW) form a helical; Signal-anchor for type II membrane protein membrane-spanning segment. Over 31–379 (EHVDHHVVSH…NTYSCMAAFT (349 aa)) the chain is Lumenal. Residues asparagine 57, asparagine 113, asparagine 168, and asparagine 277 are each glycosylated (N-linked (GlcNAc...) asparagine).

Belongs to the glycosyltransferase 31 family.

It localises to the golgi apparatus membrane. It carries out the reaction a beta-D-Gal-(1-&gt;4)-beta-D-Glc-(1&lt;-&gt;1)-Cer(d18:1(4E)) + UDP-N-acetyl-alpha-D-glucosamine = a beta-D-GlcNAc-(1-&gt;3)-beta-D-Gal-(1-&gt;4)-beta-D-Glc-(1&lt;-&gt;1)-Cer(d18:1(4E)) + UDP + H(+). It catalyses the reaction a neolactoside nLc4Cer(d18:1(4E)) + UDP-N-acetyl-alpha-D-glucosamine = a neolactoside IV(3)-beta-GlcNAc-nLc4Cer(d18:1(4E)) + UDP + H(+). It participates in protein modification; protein glycosylation. Its function is as follows. Beta-1,3-N-acetylglucosaminyltransferase that plays a key role in the synthesis of lacto- or neolacto-series carbohydrate chains on glycolipids. This is Lactosylceramide 1,3-N-acetyl-beta-D-glucosaminyltransferase A (b3gnt5a) from Danio rerio (Zebrafish).